Consider the following 113-residue polypeptide: Hydrogenase maturation factor HybF (113 aa).

Positions 2 and 3 each coordinate Ni(2+). Cys73, Cys76, Cys89, and Cys92 together coordinate Zn(2+).

It belongs to the HypA/HybF family. HybF subfamily.

Involved in the maturation of [NiFe] hydrogenases. Required for nickel insertion into the metal center of the hydrogenase. The polypeptide is Hydrogenase maturation factor HybF (Morganella morganii (Proteus morganii)).